We begin with the raw amino-acid sequence, 478 residues long: NADH-quinone oxidoreductase subunit N 1 (478 aa).

14 helical membrane passes run 6 to 26, 33 to 53, 71 to 91, 99 to 119, 121 to 141, 156 to 176, 193 to 212, 244 to 264, 265 to 285, 299 to 319, 321 to 341, 364 to 384, 388 to 408, and 438 to 458; these read TVLP…SGVF, FAIT…LVAA, FADV…VTFN, FEFP…VSAS, LITL…LAAF, FVLG…VYGF, PTAA…GLAF, IAVF…VLGQ, WRDL…IGAI, IGHM…GVSG, LIYL…IIAM, FAFV…LAGF, FYVF…LGII, and AGVS…VFHP.

Belongs to the complex I subunit 2 family. NDH-1 is composed of 14 different subunits. Subunits NuoA, H, J, K, L, M, N constitute the membrane sector of the complex.

Its subcellular location is the cell inner membrane. It catalyses the reaction a quinone + NADH + 5 H(+)(in) = a quinol + NAD(+) + 4 H(+)(out). Its function is as follows. NDH-1 shuttles electrons from NADH, via FMN and iron-sulfur (Fe-S) centers, to quinones in the respiratory chain. The immediate electron acceptor for the enzyme in this species is believed to be ubiquinone. Couples the redox reaction to proton translocation (for every two electrons transferred, four hydrogen ions are translocated across the cytoplasmic membrane), and thus conserves the redox energy in a proton gradient. The chain is NADH-quinone oxidoreductase subunit N 1 from Acidiphilium cryptum (strain JF-5).